Reading from the N-terminus, the 127-residue chain is Protein ApaG (127 aa).

In terms of domain architecture, ApaG spans 3–127 (DQPPTEIQIS…FRLAAATVFH (125 aa)).

The sequence is that of Protein ApaG from Acidithiobacillus ferrooxidans (strain ATCC 23270 / DSM 14882 / CIP 104768 / NCIMB 8455) (Ferrobacillus ferrooxidans (strain ATCC 23270)).